A 246-amino-acid polypeptide reads, in one-letter code: Cold-regulated protein 27 (246 aa).

Disordered regions lie at residues 1-39 (MVGDYRGRFSSRRFSDDSDDSSDDASSVEGETTSSMYSA) and 151-232 (EPEN…VVPL). The segment covering 168–180 (SSGSASSLKQLSS) has biased composition (low complexity).

Its subcellular location is the nucleus. In terms of biological role, together with COR28, involved in central circadian clock regulation and in flowering promotion, by binding to the chromatin of clock-associated evening genes TOC1, PRR5, ELF4 and cold-responsive genes in order to repress their transcription. Negative regulator of freezing tolerance. This is Cold-regulated protein 27 from Arabidopsis thaliana (Mouse-ear cress).